Reading from the N-terminus, the 263-residue chain is Hydroxyacylglutathione hydrolase (263 aa).

Zn(2+) contacts are provided by His60, His62, Asp64, His65, His120, Asp137, and His175.

It belongs to the metallo-beta-lactamase superfamily. Glyoxalase II family. In terms of assembly, monomer. Zn(2+) serves as cofactor.

The catalysed reaction is an S-(2-hydroxyacyl)glutathione + H2O = a 2-hydroxy carboxylate + glutathione + H(+). Its pathway is secondary metabolite metabolism; methylglyoxal degradation; (R)-lactate from methylglyoxal: step 2/2. Functionally, thiolesterase that catalyzes the hydrolysis of S-D-lactoyl-glutathione to form glutathione and D-lactic acid. The sequence is that of Hydroxyacylglutathione hydrolase from Shewanella pealeana (strain ATCC 700345 / ANG-SQ1).